We begin with the raw amino-acid sequence, 1062 residues long: Zinc finger protein swm (1062 aa).

The PWI domain occupies 7-75; that stretch reads DKLKDWLSVV…ERLFDAIASE (69 aa). Disordered stretches follow at residues 119–145 and 171–340; these read ADSP…QASQ and KPAF…PDRV. Residues 134–145 are compositionally biased toward polar residues; that stretch reads DSNQVKLEQASQ. Residues 172–182 show a composition bias toward basic and acidic residues; sequence PAFDHKTKDSH. Low complexity predominate over residues 197 to 207; sequence SASPPGRSSGV. Residues 208–220 show a composition bias toward gly residues; the sequence is SGSGGGGPGGAGL. The span at 234 to 249 shows a compositional bias: basic residues; it reads SRRRRASLRSRSRSRS. 2 stretches are compositionally biased toward basic and acidic residues: residues 264 to 273 and 294 to 310; these read RRVNEREKTQ and RNFD…DRPR. Over residues 322 to 340 the composition is skewed to polar residues; it reads RSMSPERNARRNQNSPDRV. The C3H1-type zinc-finger motif lies at 363 to 391; that stretch reads SHPRQRCRDFDEKGYCVRGETCPWDHGVN. The segment at 416 to 463 is disordered; the sequence is EIWARSGGPPPGAGQGPVPPPTQPGQTTINPFSGNVRPTTLMSGSGPS. A compositionally biased stretch (pro residues) spans 423 to 438; the sequence is GPPPGAGQGPVPPPTQ. The span at 444–461 shows a compositional bias: polar residues; the sequence is INPFSGNVRPTTLMSGSG. Residues 561-635 enclose the RRM domain; it reads SSLELRKVPR…RFIKVFWHND (75 aa). 5 disordered regions span residues 666-704, 716-741, 822-847, 886-920, and 1004-1062; these read NVPA…QANT, TTTA…LNPA, QDQL…KEQQ, SAAN…PTRV, and APVE…SWRR. Positions 721-733 are enriched in gly residues; it reads GSAGGAAGAGAPG. A compositionally biased stretch (low complexity) spans 823-840; that stretch reads DQLQAQMQQQQQQQQPPV. The segment covering 1018-1037 has biased composition (polar residues); the sequence is SLENPKQLIQSVSESESLLG. Residues 1046 to 1056 show a composition bias toward acidic residues; sequence LEDEEEDEESE.

It localises to the nucleus. In terms of biological role, negatively regulates Hedgehog (hh) protein signal in wing development. Regulates neural-specific glycosylation by binding to FucTA mRNA and facilitating its nuclear export in neural cells. The chain is Zinc finger protein swm from Drosophila melanogaster (Fruit fly).